Reading from the N-terminus, the 547-residue chain is Chaperonin GroEL (547 aa).

Residues 30 to 33 (TLGP), K51, 87 to 91 (DGTTT), G415, and D496 each bind ATP.

It belongs to the chaperonin (HSP60) family. In terms of assembly, forms a cylinder of 14 subunits composed of two heptameric rings stacked back-to-back. Interacts with the co-chaperonin GroES.

It is found in the cytoplasm. The enzyme catalyses ATP + H2O + a folded polypeptide = ADP + phosphate + an unfolded polypeptide.. Its function is as follows. Together with its co-chaperonin GroES, plays an essential role in assisting protein folding. The GroEL-GroES system forms a nano-cage that allows encapsulation of the non-native substrate proteins and provides a physical environment optimized to promote and accelerate protein folding. This Chlorobium limicola (strain DSM 245 / NBRC 103803 / 6330) protein is Chaperonin GroEL.